A 288-amino-acid chain; its full sequence is Syntaxin-1A (288 aa).

Over 1 to 265 the chain is Cytoplasmic; sequence MKDRTQELRT…KYQSKARRKK (265 aa). 3 positions are modified to phosphoserine: Ser-14, Ser-64, and Ser-95. The stretch at 68 to 109 forms a coiled coil; sequence DEKTKEELEELMSDIKKTANKVRSKLKSIEQSIEQEEGLNRS. Position 188 is a phosphoserine; by DAPK1 (Ser-188). A t-SNARE coiled-coil homology domain is found at 192-254; it reads LSEIETRHSE…ERAVSDTKKA (63 aa). Residues Lys-252, Lys-253, and Lys-256 each participate in a glycyl lysine isopeptide (Lys-Gly) (interchain with G-Cter in SUMO) cross-link. The chain crosses the membrane as a helical; Anchor for type IV membrane protein span at residues 266–286; the sequence is IMIIICCVIPGIVIASTVGGI. Residues 287–288 lie on the Extracellular side of the membrane; it reads FA.

This sequence belongs to the syntaxin family. As to quaternary structure, part of the SNARE core complex containing SNAP25, VAMP2 and STX1A; this complex constitutes the basic catalytic machinery of the complex neurotransmitter release apparatus. The SNARE complex interacts with CPLX1. Interacts with STXBP1. The interaction with STXBP1 promotes assembly of the SNARE complex. Interacts (via C-terminus) with KCNB1 (via C-terminus); the interaction increases in a calcium-dependent manner and induces a pore-independent enhancement of exocytosis in neuroendocrine cells, chromaffin cells, pancreatic beta cells and from the soma of dorsal root ganglia (DRG) neurons. Interacts with SYTL4. Interacts with STXBP6. Interacts with PLCL1 (via C2 domain). Interacts with OTOF. Interacts with LGI3. Interacts (via the H3 domain) with SLC6A4 (via the N-terminus); this interaction regulates SLC4A6 channel conductance in thalamocortical neurons. Interacts with SYT6 and SYT8; the interaction is Ca(2+)-dependent. Interacts with VAMP8. Interacts with SNAP23. Interacts with VAPA and SYBU. Interacts with PRRT2. Interacts with SEPT8. Interacts with STXBP5L. Interacts with synaptotagmin-1/SYT1. Interacts with SEPTIN5; in the cerebellar cortex. Interacts with SEPTIN4; in the striatum. Phosphorylated by CK2. Phosphorylation at Ser-188 by DAPK1 significantly decreases its interaction with STXBP1. Post-translationally, sumoylated, sumoylation is required for regulation of synaptic vesicle endocytosis.

It localises to the cytoplasmic vesicle. The protein resides in the secretory vesicle. Its subcellular location is the synaptic vesicle membrane. The protein localises to the cell membrane. It is found in the synapse. It localises to the synaptosome. Plays an essential role in hormone and neurotransmitter calcium-dependent exocytosis and endocytosis. Part of the SNARE (Soluble NSF Attachment Receptor) complex composed of SNAP25, STX1A and VAMP2 which mediates the fusion of synaptic vesicles with the presynaptic plasma membrane. STX1A and SNAP25 are localized on the plasma membrane while VAMP2 resides in synaptic vesicles. The pairing of the three SNAREs from the N-terminal SNARE motifs to the C-terminal anchors leads to the formation of the SNARE complex, which brings membranes into close proximity and results in final fusion. Participates in the calcium-dependent regulation of acrosomal exocytosis in sperm. Also plays an important role in the exocytosis of hormones such as insulin or glucagon-like peptide 1 (GLP-1). In Pongo abelii (Sumatran orangutan), this protein is Syntaxin-1A (STX1A).